A 222-amino-acid polypeptide reads, in one-letter code: Sugar fermentation stimulation protein homolog (222 aa).

This sequence belongs to the SfsA family.

The protein is Sugar fermentation stimulation protein homolog of Thermotoga petrophila (strain ATCC BAA-488 / DSM 13995 / JCM 10881 / RKU-1).